The chain runs to 570 residues: Protein NRT1/ PTR FAMILY 8.2 (570 aa).

Thr-99 is subject to Phosphothreonine. 10 consecutive transmembrane segments (helical) span residues Ile-100 to Val-120, Ala-136 to Ile-156, Phe-182 to Val-202, Trp-210 to Ala-230, Ile-335 to Leu-355, Ile-370 to Tyr-390, Ile-414 to Ala-434, Ile-454 to Gly-474, Ala-493 to Val-513, and Tyr-537 to Ala-557.

Belongs to the major facilitator superfamily. Proton-dependent oligopeptide transporter (POT/PTR) (TC 2.A.17) family. Expressed in developing and germinating pollen grains and ovules.

Its subcellular location is the cell membrane. Functionally, peptide transporter. Mediates the transport of di- and tripeptides. High affinity transporter. Involved in the uptake of peptides during pollen germination and tube growth. This chain is Protein NRT1/ PTR FAMILY 8.2 (NPF8.2), found in Arabidopsis thaliana (Mouse-ear cress).